Here is a 704-residue protein sequence, read N- to C-terminus: Protein kinase C-like 1 (704 aa).

A phosphothreonine; by autocatalysis mark is found at Thr89 and Thr139. 2 consecutive Phorbol-ester/DAG-type zinc fingers follow at residues 165 to 215 (GHQF…IMQC) and 237 to 287 (PHRF…SNLC). Position 324 is a phosphothreonine; by autocatalysis (Thr324). A Protein kinase domain is found at 375-634 (FNLLKVLGKG…DGPIRQHCFF (260 aa)). Residues 381–389 (LGKGSFGKV) and Lys404 contribute to the ATP site. Residue Asp499 is the Proton acceptor of the active site. The AGC-kinase C-terminal domain occupies 635-704 (RGVDWKRFEN…FSYTNPHFSK (70 aa)).

It belongs to the protein kinase superfamily. AGC Ser/Thr protein kinase family. PKC subfamily.

The enzyme catalyses L-seryl-[protein] + ATP = O-phospho-L-seryl-[protein] + ADP + H(+). The catalysed reaction is L-threonyl-[protein] + ATP = O-phospho-L-threonyl-[protein] + ADP + H(+). Its function is as follows. Diacylglycerol (DAG)-dependent serine/threonine-protein kinase that phosphorylates a range of cellular proteins. Phosphorylates mlk-1, a component of the JNK pathway. Involved in axon regeneration after injury probably by activating the JNK pathway. Plays a role in resistance to fungal infection and in wound healing by promoting expression of antimicrobial peptide nlp-29 in the epidermis downstream of gpa-12 and plc-3 and upstream of tir-1-p38-like pathway. Probably by regulating neuronal transmission in ALA neurons, regulates the decrease in pharyngeal pumping during the quiescent state that precedes each larval molt, downstream of lin-3 and receptor let-23 and phospholipase plc-3. The protein is Protein kinase C-like 1 (tpa-1) of Caenorhabditis elegans.